A 172-amino-acid polypeptide reads, in one-letter code: Trypsin inhibitor 1A (172 aa).

2 disulfide bridges follow: cysteine 40–cysteine 84 and cysteine 133–cysteine 139.

The protein belongs to the protease inhibitor I3 (leguminous Kunitz-type inhibitor) family.

WTI-1B inhibits trypsin stoichiometrically. The protein is Trypsin inhibitor 1A of Psophocarpus tetragonolobus (Winged bean).